Here is a 504-residue protein sequence, read N- to C-terminus: L-carnitine/gamma-butyrobetaine antiporter (504 aa).

Helical transmembrane passes span 10–30 (IEPK…WLTV), 51–71 (WGWA…WLVF), 92–112 (IFMM…SIEI), 143–163 (GPLP…FFFV), 195–215 (FYLV…TPLV), 231–251 (LDAI…ACGL), 263–283 (SYLS…SFIM), 316–336 (WTVF…IFLA), 347–367 (LCFG…TVLG), 398–418 (WAAL…CFIA), 446–466 (LLVR…LLAL), and 475–495 (AIIA…LSFI).

The protein belongs to the BCCT transporter (TC 2.A.15) family. CaiT subfamily. Homotrimer.

It is found in the cell inner membrane. It catalyses the reaction 4-(trimethylamino)butanoate(in) + (R)-carnitine(out) = 4-(trimethylamino)butanoate(out) + (R)-carnitine(in). It functions in the pathway amine and polyamine metabolism; carnitine metabolism. Its function is as follows. Catalyzes the exchange of L-carnitine for gamma-butyrobetaine. The sequence is that of L-carnitine/gamma-butyrobetaine antiporter from Shigella flexneri serotype 5b (strain 8401).